A 327-amino-acid polypeptide reads, in one-letter code: tRNA pseudouridine synthase B (327 aa).

Residue Asp83 is the Nucleophile of the active site.

This sequence belongs to the pseudouridine synthase TruB family. Type 1 subfamily.

The catalysed reaction is uridine(55) in tRNA = pseudouridine(55) in tRNA. In terms of biological role, responsible for synthesis of pseudouridine from uracil-55 in the psi GC loop of transfer RNAs. This is tRNA pseudouridine synthase B from Mesomycoplasma hyopneumoniae (strain 232) (Mycoplasma hyopneumoniae).